The chain runs to 259 residues: DNA utilization protein HofM (259 aa).

Functionally, required for the use of extracellular DNA as a nutrient. This chain is DNA utilization protein HofM (hofM), found in Escherichia coli (strain K12).